We begin with the raw amino-acid sequence, 139 residues long: Small ribosomal subunit protein bS16 (139 aa).

The segment at 84–139 (KGEPAPAPLLQPAEKAARPSFEAIGGEDEGKGEAITQKKKADKRDEAAAESSASEA) is disordered.

It belongs to the bacterial ribosomal protein bS16 family.

The chain is Small ribosomal subunit protein bS16 from Streptomyces lividans.